The sequence spans 671 residues: Condensin complex subunit 2 (671 aa).

The span at Met1–Thr24 shows a compositional bias: polar residues. Disordered stretches follow at residues Met1–Asp33, Asn404–Glu444, and Arg510–Pro564. A Kleisin-gamma middle domain (GM domain) involved in chromosome-binding motif is present at residues Trp406–Arg415. The span at Val536 to Asp556 shows a compositional bias: acidic residues.

This sequence belongs to the CND2 (condensin subunit 2) family. In terms of assembly, component of the condensin complex. As to expression, mostly expressed in flower buds and flowers, and, to a lower extent, in roots, stems, leaves and seedlings.

The protein localises to the cytoplasm. It localises to the chromosome. In terms of biological role, regulatory subunit of the condensin complex, a complex required for conversion of interphase chromatin into mitotic-like condense chromosomes. The condensin complex probably introduces positive supercoils into relaxed DNA in the presence of type I topoisomerases and converts nicked DNA into positive knotted forms in the presence of type II topoisomerases. Essential protein. The chain is Condensin complex subunit 2 (CAPH) from Arabidopsis thaliana (Mouse-ear cress).